The chain runs to 296 residues: Endonuclease 5 (296 aa).

The signal sequence occupies residues 1-20 (MRLWIVSVLVLTHLVHGALC). A divalent metal cation-binding residues include W21 and H26. 21–26 (WGKDGH) is a binding site for substrate. Residues C30 and C62 are joined by a disulfide bond. Residues D66 and H81 each contribute to the a divalent metal cation site. Residues 66-72 (DEIKKLS), 81-84 (HYVN), and 91-96 (NYEYCR) contribute to the substrate site. 3 disulfide bridges follow: C90–C243, C98–C108, and C223–C230. Substrate contacts are provided by N115 and Y133. N115 carries an N-linked (GlcNAc...) asparagine glycan. N-linked (GlcNAc...) asparagine glycosylation is present at N134. Residues H144, D148, and H154 each contribute to the a divalent metal cation site. Positions 144-193 (HYMGDVHQPLHTGFLGDLGGNTIIVNWYHNKSNLHHVWDNMIIDSALETY) are substrate binding. N-linked (GlcNAc...) asparagine glycosylation is present at N173. The a divalent metal cation site is built by H178 and D182. N-linked (GlcNAc...) asparagine glycosylation occurs at N195. A propeptide spans 281–296 (ATLNRIFSAKPKLAGL) (removed in mature form).

The protein belongs to the nuclease type I family. As to quaternary structure, monomer. The cofactor is Zn(2+).

It carries out the reaction Endonucleolytic cleavage to 5'-phosphomononucleotide and 5'-phosphooligonucleotide end-products.. Hydrolyzes, with low efficiency, only single-stranded DNA and RNA without apparent specificity for bases. Endonuclease that recognizes and cleaves some mismatches with high efficiency, including heteroduplex double-stranded DNA; mostly efficient on T/G, A/G and G/G mismatches, less efficient for T/T and poorly efficient for C/C, A/A, T/C and A/C. This is Endonuclease 5 from Arabidopsis thaliana (Mouse-ear cress).